The sequence spans 950 residues: Protocadherin alpha-6 (950 aa).

The first 29 residues, 1–29 (MVFTPEDRLGKQCLLLPLLLLAAWKVGSG), serve as a signal peptide directing secretion. Topologically, residues 30–697 (QLHYSVPEEA…GPEAALVDVN (668 aa)) are extracellular. Cadherin domains follow at residues 34–133 (SVPE…PPLF), 157–242 (ASDA…APTF), 243–350 (EQSE…VPEI), 351–455 (ALTS…APAF), 456–565 (AQPE…APAL), and 581–678 (VPRS…APKA). N-linked (GlcNAc...) asparagine glycosylation is found at N257, N265, N386, and N548. Residues 698–718 (VYLIIAICAVSSLLVLTLLLY) traverse the membrane as a helical segment. Over 719–950 (TALRCSAPPT…GNSTTDNSDQ (232 aa)) the chain is Cytoplasmic. 4 PXXP repeats span residues 799–802 (PRQP), 832–835 (PGGP), 873–876 (PGNP), and 891–894 (PGSP). Positions 799-894 (PRQPNPDWRY…PDKFIIPGSP (96 aa)) are 4 X 4 AA repeats of P-X-X-P. A disordered region spans residues 830 to 950 (AGPGGPDQQW…GNSTTDNSDQ (121 aa)). Basic and acidic residues predominate over residues 909–923 (DKSDFITFGKKEETK).

It localises to the cell membrane. The protein localises to the secreted. Its function is as follows. Potential calcium-dependent cell-adhesion protein. May be involved in the establishment and maintenance of specific neuronal connections in the brain. This chain is Protocadherin alpha-6 (PCDHA6), found in Homo sapiens (Human).